The chain runs to 316 residues: Pantothenate kinase (316 aa).

Residue 95–102 (GSVAVGKS) participates in ATP binding.

Belongs to the prokaryotic pantothenate kinase family.

Its subcellular location is the cytoplasm. The enzyme catalyses (R)-pantothenate + ATP = (R)-4'-phosphopantothenate + ADP + H(+). It functions in the pathway cofactor biosynthesis; coenzyme A biosynthesis; CoA from (R)-pantothenate: step 1/5. This is Pantothenate kinase from Yersinia pseudotuberculosis serotype O:3 (strain YPIII).